A 386-amino-acid chain; its full sequence is Probable magnesium transporter NIPA5 (386 aa).

The Extracellular portion of the chain corresponds to 1–18; sequence MVYSSGSWRDAYKGMSSD. The helical transmembrane segment at 19-39 threads the bilayer; that stretch reads NVKGLVLALSSSIFIGASFIV. Topologically, residues 40-61 are cytoplasmic; the sequence is KKKGLKKAGASGLRAGSGGYSY. The next 2 helical transmembrane spans lie at 62–82 and 83–103; these read LLEPLWWIGMITMIVGEIANF and AAYAFAPAILVTPLGALSIII. Topologically, residues 104 to 115 are cytoplasmic; sequence SASLAHIILQEK. Residues 116-136 traverse the membrane as a helical segment; the sequence is LHTFGILGCALCIVGSVTIVL. Residues 137-157 lie on the Extracellular side of the membrane; that stretch reads HAPQEQDIVSVLEVWNLATEP. A helical membrane pass occupies residues 158-178; the sequence is AFLFYAAAVVGAAIVLIVQFI. The Cytoplasmic portion of the chain corresponds to 179–189; that stretch reads PLYGQSHVMVY. A helical membrane pass occupies residues 190-210; the sequence is IGVCSLIGSLSVMSVKALGIA. The Extracellular portion of the chain corresponds to 211 to 220; sequence LKLTFSGTNQ. The helical transmembrane segment at 221 to 241 threads the bilayer; sequence LGYPQTWVFTVIVLFCVITQM. The Cytoplasmic portion of the chain corresponds to 242 to 255; sequence NYLNKALDTFNTAV. The helical transmembrane segment at 256–276 threads the bilayer; the sequence is VSPIYYVMFTSLTILASVIMF. Residues 277–283 are Extracellular-facing; that stretch reads KDWDRQS. A helical membrane pass occupies residues 284-304; sequence GTQIMTELCGFVTILSGTFLL. At 305 to 386 the chain is on the cytoplasmic side; sequence HTTTDMVDGE…LRRQESSLRS (82 aa). Residues 352 to 386 form a disordered region; it reads RQESAKSPRPARQNKQLEDDLEAVPLRRQESSLRS. Over residues 376 to 386 the composition is skewed to basic and acidic residues; it reads PLRRQESSLRS.

This sequence belongs to the NIPA (TC 2.A.7) family. In terms of assembly, homodimer.

The protein localises to the cell membrane. The protein resides in the early endosome. Acts as a Mg(2+) transporter. Can also transport other divalent cations such as Fe(2+), Sr(2+), Ba(2+), Mn(2+) and Co(2+) but to a much less extent than Mg(2+). This is Probable magnesium transporter NIPA5 from Arabidopsis thaliana (Mouse-ear cress).